The chain runs to 348 residues: Anthranilate phosphoribosyltransferase (348 aa).

5-phospho-alpha-D-ribose 1-diphosphate-binding positions include glycine 81, 84–85, 91–94, 109–117, and serine 121; these read GD, NVST, and KHGNRAVSG. Residue glycine 81 participates in anthranilate binding. Residue serine 93 participates in Mg(2+) binding. Asparagine 112 contributes to the anthranilate binding site. Arginine 167 contributes to the anthranilate binding site. Mg(2+)-binding residues include aspartate 226 and glutamate 227.

The protein belongs to the anthranilate phosphoribosyltransferase family. As to quaternary structure, homodimer. Requires Mg(2+) as cofactor.

The enzyme catalyses N-(5-phospho-beta-D-ribosyl)anthranilate + diphosphate = 5-phospho-alpha-D-ribose 1-diphosphate + anthranilate. The protein operates within amino-acid biosynthesis; L-tryptophan biosynthesis; L-tryptophan from chorismate: step 2/5. In terms of biological role, catalyzes the transfer of the phosphoribosyl group of 5-phosphorylribose-1-pyrophosphate (PRPP) to anthranilate to yield N-(5'-phosphoribosyl)-anthranilate (PRA). The protein is Anthranilate phosphoribosyltransferase of Ectopseudomonas mendocina (strain ymp) (Pseudomonas mendocina).